Reading from the N-terminus, the 407-residue chain is 4-hydroxy-3-methylbut-2-en-1-yl diphosphate synthase (ferredoxin) (407 aa).

[4Fe-4S] cluster contacts are provided by Cys-316, Cys-319, Cys-350, and Glu-357.

This sequence belongs to the IspG family. [4Fe-4S] cluster is required as a cofactor.

The enzyme catalyses (2E)-4-hydroxy-3-methylbut-2-enyl diphosphate + 2 oxidized [2Fe-2S]-[ferredoxin] + H2O = 2-C-methyl-D-erythritol 2,4-cyclic diphosphate + 2 reduced [2Fe-2S]-[ferredoxin] + H(+). It participates in isoprenoid biosynthesis; isopentenyl diphosphate biosynthesis via DXP pathway; isopentenyl diphosphate from 1-deoxy-D-xylulose 5-phosphate: step 5/6. Its function is as follows. Converts 2C-methyl-D-erythritol 2,4-cyclodiphosphate (ME-2,4cPP) into 1-hydroxy-2-methyl-2-(E)-butenyl 4-diphosphate. This Prochlorococcus marinus (strain SARG / CCMP1375 / SS120) protein is 4-hydroxy-3-methylbut-2-en-1-yl diphosphate synthase (ferredoxin).